Consider the following 475-residue polypeptide: Ribulose bisphosphate carboxylase large chain (475 aa).

Positions 1-2 are excised as a propeptide; it reads MS. Pro-3 bears the N-acetylproline mark. Lys-14 is modified (N6,N6,N6-trimethyllysine). The substrate site is built by Asn-123 and Thr-173. The active-site Proton acceptor is the Lys-175. Lys-177 contacts substrate. Mg(2+)-binding residues include Lys-201, Asp-203, and Glu-204. An N6-carboxylysine modification is found at Lys-201. His-294 serves as the catalytic Proton acceptor. The substrate site is built by Arg-295, His-327, and Ser-379.

The protein belongs to the RuBisCO large chain family. Type I subfamily. Heterohexadecamer of 8 large chains and 8 small chains; disulfide-linked. The disulfide link is formed within the large subunit homodimers. It depends on Mg(2+) as a cofactor. Post-translationally, the disulfide bond which can form in the large chain dimeric partners within the hexadecamer appears to be associated with oxidative stress and protein turnover.

The protein resides in the plastid. The protein localises to the chloroplast. The catalysed reaction is 2 (2R)-3-phosphoglycerate + 2 H(+) = D-ribulose 1,5-bisphosphate + CO2 + H2O. It catalyses the reaction D-ribulose 1,5-bisphosphate + O2 = 2-phosphoglycolate + (2R)-3-phosphoglycerate + 2 H(+). Functionally, ruBisCO catalyzes two reactions: the carboxylation of D-ribulose 1,5-bisphosphate, the primary event in carbon dioxide fixation, as well as the oxidative fragmentation of the pentose substrate in the photorespiration process. Both reactions occur simultaneously and in competition at the same active site. The sequence is that of Ribulose bisphosphate carboxylase large chain from Cryptomeria japonica (Japanese cedar).